The primary structure comprises 469 residues: RNA-editing ligase 1, mitochondrial (469 aa).

A mitochondrion-targeting transit peptide spans methionine 1–threonine 44. ATP-binding positions include isoleucine 59 to isoleucine 61, glutamate 86 to asparagine 92, arginine 111, glutamate 159, phenylalanine 209, and lysine 307 to arginine 309. The active-site N6-AMP-lysine intermediate is lysine 87. Positions alanine 450 to glutamate 469 are disordered.

It belongs to the RNA ligase 2 family. As to quaternary structure, component of the RNA editing complex (editosome), a 1600 kDa complex composed of at least 20 proteins. Interacts with terminal uridylyltransferase MEAT1.

Its subcellular location is the mitochondrion. The catalysed reaction is ATP + (ribonucleotide)n-3'-hydroxyl + 5'-phospho-(ribonucleotide)m = (ribonucleotide)n+m + AMP + diphosphate.. Functionally, essential for RNA editing. RNA editing in kinetoplastid mitochondria inserts and deletes uridylates at multiple sites in pre-mRNAs as directed by guide RNAs. The polypeptide is RNA-editing ligase 1, mitochondrial (REL1) (Trypanosoma brucei brucei).